Reading from the N-terminus, the 159-residue chain is Fimbrial protein MyfA (159 aa).

The N-terminal stretch at 1–29 (MNMKKFVKKPLAIAVLMLASGGMVNMVHA) is a signal peptide.

Forms a homomer composed of subunits assembled in a large structure resistant to proteases and chaotropic agents.

The protein resides in the fimbrium. Its function is as follows. Major pilus subunit. Expressed only in pathogenic serotypes, it is part of myf, a probable virulence factor. This is Fimbrial protein MyfA (myfA) from Yersinia enterocolitica.